A 322-amino-acid chain; its full sequence is Phospholipase A1 (322 aa).

The N-terminal stretch at 1–18 (MNFKYSILFICFGTLDRG) is a signal peptide. Cys-23 and Cys-106 are joined by a disulfide. Ser-156 acts as the Nucleophile in catalysis. The active-site Charge relay system is the Asp-184. Intrachain disulfides connect Cys-195–Cys-200 and Cys-238–Cys-246. The active-site Charge relay system is the His-248. 3 disulfides stabilise this stretch: Cys-263/Cys-290, Cys-264/Cys-315, and Cys-283/Cys-288.

This sequence belongs to the AB hydrolase superfamily. Lipase family. In terms of processing, contains six disulfide bonds. Post-translationally, is not glycosylated. As to expression, expressed by the venom gland.

The protein localises to the secreted. It catalyses the reaction a 1,2-diacyl-sn-glycero-3-phosphocholine + H2O = a 2-acyl-sn-glycero-3-phosphocholine + a fatty acid + H(+). Functionally, catalyzes the hydrolysis of phosphatidylcholine with phospholipase A1 activity. Shows hemolytic activity. Acts as an allergen. The polypeptide is Phospholipase A1 (Polybia paulista (Neotropical social wasp)).